The sequence spans 141 residues: Large ribosomal subunit protein uL11 (141 aa).

Belongs to the universal ribosomal protein uL11 family. As to quaternary structure, part of the ribosomal stalk of the 50S ribosomal subunit. Interacts with L10 and the large rRNA to form the base of the stalk. L10 forms an elongated spine to which L12 dimers bind in a sequential fashion forming a multimeric L10(L12)X complex. In terms of processing, one or more lysine residues are methylated.

Its function is as follows. Forms part of the ribosomal stalk which helps the ribosome interact with GTP-bound translation factors. The chain is Large ribosomal subunit protein uL11 from Clostridium acetobutylicum (strain ATCC 824 / DSM 792 / JCM 1419 / IAM 19013 / LMG 5710 / NBRC 13948 / NRRL B-527 / VKM B-1787 / 2291 / W).